The following is a 277-amino-acid chain: Polyamine aminopropyltransferase (277 aa).

The PABS domain occupies 2 to 235 (ELWFTENQDE…SLWTFTMGSK (234 aa)). Gln-31 contacts S-methyl-5'-thioadenosine. His-62 and Asp-86 together coordinate spermidine. S-methyl-5'-thioadenosine-binding positions include Glu-106 and 137–138 (DG). Asp-155 functions as the Proton acceptor in the catalytic mechanism. A spermidine-binding site is contributed by 155 to 158 (DSTD). Pro-162 serves as a coordination point for S-methyl-5'-thioadenosine.

This sequence belongs to the spermidine/spermine synthase family. In terms of assembly, homodimer or homotetramer.

It localises to the cytoplasm. It carries out the reaction S-adenosyl 3-(methylsulfanyl)propylamine + putrescine = S-methyl-5'-thioadenosine + spermidine + H(+). It functions in the pathway amine and polyamine biosynthesis; spermidine biosynthesis; spermidine from putrescine: step 1/1. In terms of biological role, catalyzes the irreversible transfer of a propylamine group from the amino donor S-adenosylmethioninamine (decarboxy-AdoMet) to putrescine (1,4-diaminobutane) to yield spermidine. The polypeptide is Polyamine aminopropyltransferase (Thermoanaerobacter pseudethanolicus (strain ATCC 33223 / 39E) (Clostridium thermohydrosulfuricum)).